We begin with the raw amino-acid sequence, 282 residues long: Bifunctional protein FolD (282 aa).

NADP(+) is bound by residues 165 to 167 (GRS), Ser-190, and Thr-231.

The protein belongs to the tetrahydrofolate dehydrogenase/cyclohydrolase family. As to quaternary structure, homodimer.

It catalyses the reaction (6R)-5,10-methylene-5,6,7,8-tetrahydrofolate + NADP(+) = (6R)-5,10-methenyltetrahydrofolate + NADPH. It carries out the reaction (6R)-5,10-methenyltetrahydrofolate + H2O = (6R)-10-formyltetrahydrofolate + H(+). Its pathway is one-carbon metabolism; tetrahydrofolate interconversion. Catalyzes the oxidation of 5,10-methylenetetrahydrofolate to 5,10-methenyltetrahydrofolate and then the hydrolysis of 5,10-methenyltetrahydrofolate to 10-formyltetrahydrofolate. This chain is Bifunctional protein FolD, found in Clostridium botulinum (strain Alaska E43 / Type E3).